The chain runs to 209 residues: NADH-quinone oxidoreductase subunit C (209 aa).

The protein belongs to the complex I 30 kDa subunit family. As to quaternary structure, NDH-1 is composed of 14 different subunits. Subunits NuoB, C, D, E, F, and G constitute the peripheral sector of the complex.

The protein resides in the cell inner membrane. It carries out the reaction a quinone + NADH + 5 H(+)(in) = a quinol + NAD(+) + 4 H(+)(out). In terms of biological role, NDH-1 shuttles electrons from NADH, via FMN and iron-sulfur (Fe-S) centers, to quinones in the respiratory chain. The immediate electron acceptor for the enzyme in this species is believed to be ubiquinone. Couples the redox reaction to proton translocation (for every two electrons transferred, four hydrogen ions are translocated across the cytoplasmic membrane), and thus conserves the redox energy in a proton gradient. The protein is NADH-quinone oxidoreductase subunit C of Bordetella petrii (strain ATCC BAA-461 / DSM 12804 / CCUG 43448).